A 330-amino-acid chain; its full sequence is Low affinity immunoglobulin gamma Fc region receptor II (330 aa).

An N-terminal signal peptide occupies residues 1–29 (MESNWTVHVFSRTLCHMLLWTAVLNLAAG). Residues 30–210 (THDLPKAVVK…QGPKSSRSLP (181 aa)) are Extracellular-facing. Ig-like C2-type domains follow at residues 50 to 106 (EDTV…QTRL) and 131 to 189 (GETI…LGRT). 2 disulfide bridges follow: cysteine 57–cysteine 99 and cysteine 138–cysteine 182. N-linked (GlcNAc...) asparagine glycans are attached at residues asparagine 65, asparagine 92, asparagine 166, and asparagine 173. A helical transmembrane segment spans residues 211 to 231 (VLTIVAAVTGIAVAAIVIILV). At 232–330 (SLVYLKKKQV…ETEHDYQNHI (99 aa)) the chain is on the cytoplasmic side. The tract at residues 261–330 (VGEYRQPSGG…ETEHDYQNHI (70 aa)) is disordered. At tyrosine 290 the chain carries Phosphotyrosine. The short motif at 307–312 (ITYSLL) is the ITIM motif element. At tyrosine 309 the chain carries Phosphotyrosine; by SRC-type Tyr-kinases. Tyrosine 326 carries the phosphotyrosine modification.

Interacts with FGR. Interacts with LYN. In terms of processing, glycosylated. When coaggregated to BCR, isoform IIB1 and isoform IIB1' become tyrosine phosphorylated and bind to the SH2 domains of the protein tyrosine phosphatase PTPC1. Phosphorylated by SRC-type Tyr-kinases such as LYN, BLK, FYN and SYK. As to expression, widely expressed by cells of hemopoietic origin. The isoforms are differentially expressed. Isoform IIB1 is preferentially expressed by cells of the lymphoid lineage, isoform IIB2 by cells of the myeloid lineage, and isoform IIB3 is released by macrophages and is present in the serum. Isoform IIB1' is expressed in myeloid and lymphoid cell lines, in normal spleen cells, and in resting or LPS-activated B-cells but is not detected in mesenteric lymph node cells.

The protein resides in the cell membrane. The protein localises to the cytoplasm. Its subcellular location is the cytoskeleton. It is found in the secreted. Functionally, receptor for the Fc region of complexed immunoglobulins gamma. Low affinity receptor. Involved in a variety of effector and regulatory functions such as phagocytosis of antigen-antibody complexes from the circulation and modulation of antibody production by B-cells. Isoform IIB1 and isoform IIB1' form caps but fail to mediate endocytosis or phagocytosis. Isoform IIB2 can mediate the endocytosis of soluble immune complexes via clathrin-coated pits. Isoform IIB1 and isoform IIB2 can down-regulate B-cell, T-cell, and mast cell activation when coaggregated to B-cell receptors for AG (BCR), T-cell receptors for AG (TCR), and Fc receptors, respectively. In Mus musculus (Mouse), this protein is Low affinity immunoglobulin gamma Fc region receptor II (Fcgr2).